Consider the following 581-residue polypeptide: Protein FAM83D (581 aa).

The interval 1–297 (MALRYDGLDE…LYAQSKPISS (297 aa)) is DUF1669. Positions 75–101 (PGEEGAAAGAEDSFGSSHDCSSGTYFP) are disordered. Residues 88–98 (FGSSHDCSSGT) are compositionally biased toward polar residues. Ser-296 carries the post-translational modification Phosphoserine. Residues 338-581 (TPRKVELGGE…REIMLYPSYQ (244 aa)) form a required for interaction with KIF22 and function in chromosome congression region. 2 disordered regions span residues 366–401 (EDYF…MSDV) and 426–503 (QTVV…GPPK). Basic and acidic residues predominate over residues 369–382 (FSSRKDRLEGRRVT). Low complexity predominate over residues 426 to 438 (QTVVPTTSATTQT). The residue at position 456 (Ser-456) is a Phosphoserine. Residues 462–488 (SVSRSSSLRSSSSLSSQGSVASSIGSQ) show a composition bias toward low complexity. Thr-507 bears the Phosphothreonine mark.

It belongs to the FAM83 family. As to quaternary structure, interacts with FBXW7; promotes FBXW7 degradation. May interact with RAF1. Interacts with KIF22; recruits KIF22 to mitotic spindle microtubules. Interacts (via C-terminus) with DYNLL1. Interacts with HMMR. Directly interacts (via DUF1669) with CSNK1A1 and CSNK1A1L. In terms of processing, phosphorylated during mitosis.

The protein localises to the cytoplasm. It is found in the cytoskeleton. The protein resides in the spindle. Its subcellular location is the spindle pole. Its function is as follows. Through the degradation of FBXW7, may act indirectly on the expression and downstream signaling of MTOR, JUN and MYC. May play also a role in cell proliferation through activation of the ERK1/ERK2 signaling cascade. May also be important for proper chromosome congression and alignment during mitosis through its interaction with KIF22. This Bos taurus (Bovine) protein is Protein FAM83D.